A 1024-amino-acid polypeptide reads, in one-letter code: Beta-galactosidase (1024 aa).

Substrate-binding residues include Asn-103 and Asp-202. Asp-202 provides a ligand contact to Na(+). Positions 417, 419, and 462 each coordinate Mg(2+). Substrate is bound by residues Glu-462 and 538 to 541; that span reads EYAH. The active-site Proton donor is the Glu-462. Glu-538 (nucleophile) is an active-site residue. Asn-598 serves as a coordination point for Mg(2+). Na(+) is bound by residues Phe-602 and Asn-605. Substrate-binding residues include Asn-605 and Trp-1000.

Belongs to the glycosyl hydrolase 2 family. As to quaternary structure, homotetramer. It depends on Mg(2+) as a cofactor. Na(+) is required as a cofactor.

The catalysed reaction is Hydrolysis of terminal non-reducing beta-D-galactose residues in beta-D-galactosides.. This is Beta-galactosidase from Escherichia coli O6:H1 (strain CFT073 / ATCC 700928 / UPEC).